The primary structure comprises 801 residues: Elongation factor G, mitochondrial (801 aa).

A mitochondrion-targeting transit peptide spans 1-62; the sequence is MRTPTLARLP…LSKHFQQRRN (62 aa). Residues 99-386 enclose the tr-type G domain; it reads SRVRNIGIAA…GVIDYLPNPS (288 aa). Residues 108 to 115, 184 to 188, and 238 to 241 each bind GTP; these read AHIDSGKT, DTPGH, and NKMD.

This sequence belongs to the TRAFAC class translation factor GTPase superfamily. Classic translation factor GTPase family. EF-G/EF-2 subfamily.

Its subcellular location is the mitochondrion. The protein operates within protein biosynthesis; polypeptide chain elongation. In terms of biological role, mitochondrial GTPase that catalyzes the GTP-dependent ribosomal translocation step during translation elongation. During this step, the ribosome changes from the pre-translocational (PRE) to the post-translocational (POST) state as the newly formed A-site-bound peptidyl-tRNA and P-site-bound deacylated tRNA move to the P and E sites, respectively. Catalyzes the coordinated movement of the two tRNA molecules, the mRNA and conformational changes in the ribosome. This chain is Elongation factor G, mitochondrial (mef1), found in Aspergillus niger (strain ATCC MYA-4892 / CBS 513.88 / FGSC A1513).